The primary structure comprises 315 residues: Tyrosine recombinase XerC (315 aa).

A Core-binding (CB) domain is found at 1 to 103 (MIASFYAFLD…AIKSFAKFCV (103 aa)). The Tyr recombinase domain occupies 124-306 (ELPSPLTYEQ…SMKLKKQIHD (183 aa)). Active-site residues include Arg164, Lys188, His258, Arg261, and His284. Tyr293 serves as the catalytic O-(3'-phospho-DNA)-tyrosine intermediate.

Belongs to the 'phage' integrase family. XerC subfamily. As to quaternary structure, forms a cyclic heterotetrameric complex composed of two molecules of XerC and two molecules of XerD.

It is found in the cytoplasm. In terms of biological role, site-specific tyrosine recombinase, which acts by catalyzing the cutting and rejoining of the recombining DNA molecules. The XerC-XerD complex is essential to convert dimers of the bacterial chromosome into monomers to permit their segregation at cell division. It also contributes to the segregational stability of plasmids. This is Tyrosine recombinase XerC from Chlamydia muridarum (strain MoPn / Nigg).